We begin with the raw amino-acid sequence, 71 residues long: Conotoxin ba5b (71 aa).

A signal peptide spans 1-19 (MLCLPVFITLLLLVSPSAA). Residues 20–52 (LPVESELQRDLTQDSPKDFRIREPLLLSKMFDR) constitute a propeptide that is removed on maturation. Disulfide bonds link Cys54/Cys63 and Cys55/Cys64. Cys64 carries the post-translational modification Cysteine amide. A propeptide spanning residues 66–71 (RYQRGS) is cleaved from the precursor.

It belongs to the conotoxin T superfamily. As to expression, expressed by the venom duct.

Its subcellular location is the secreted. In Conus bayani (Bayan's cone), this protein is Conotoxin ba5b.